A 281-amino-acid chain; its full sequence is Ribose-phosphate pyrophosphokinase (281 aa).

ATP contacts are provided by residues 33–35 (DGE) and 90–91 (RQ). Mg(2+) contacts are provided by H123 and D161. Residue K185 is part of the active site. Positions 187 and 211 each coordinate D-ribose 5-phosphate.

It belongs to the ribose-phosphate pyrophosphokinase family. Class III (archaeal) subfamily. Mg(2+) serves as cofactor.

The protein resides in the cytoplasm. It carries out the reaction D-ribose 5-phosphate + ATP = 5-phospho-alpha-D-ribose 1-diphosphate + AMP + H(+). It functions in the pathway metabolic intermediate biosynthesis; 5-phospho-alpha-D-ribose 1-diphosphate biosynthesis; 5-phospho-alpha-D-ribose 1-diphosphate from D-ribose 5-phosphate (route I): step 1/1. In terms of biological role, involved in the biosynthesis of the central metabolite phospho-alpha-D-ribosyl-1-pyrophosphate (PRPP) via the transfer of pyrophosphoryl group from ATP to 1-hydroxyl of ribose-5-phosphate (Rib-5-P). The chain is Ribose-phosphate pyrophosphokinase from Halobacterium salinarum (strain ATCC 29341 / DSM 671 / R1).